Here is a 367-residue protein sequence, read N- to C-terminus: Heme A synthase (367 aa).

5 helical membrane passes run 25–45, 111–131, 139–159, 174–194, and 210–230; these read ALRL…LVGG, LIAR…WLTG, WPLV…WWMV, LATH…IMRG, and GFAA…ALVA. His274 lines the heme pocket. 3 consecutive transmembrane segments (helical) span residues 276–296, 305–325, and 327–347; these read IGAY…LRAA, AVVL…TLLM, and VPLH…GFAV. His335 contributes to the heme binding site.

Belongs to the COX15/CtaA family. Type 2 subfamily. As to quaternary structure, interacts with CtaB. Heme b serves as cofactor.

The protein resides in the cell membrane. The enzyme catalyses Fe(II)-heme o + 2 A + H2O = Fe(II)-heme a + 2 AH2. Its pathway is porphyrin-containing compound metabolism; heme A biosynthesis; heme A from heme O: step 1/1. Catalyzes the conversion of heme O to heme A by two successive hydroxylations of the methyl group at C8. The first hydroxylation forms heme I, the second hydroxylation results in an unstable dihydroxymethyl group, which spontaneously dehydrates, resulting in the formyl group of heme A. The chain is Heme A synthase from Rhizobium etli (strain CIAT 652).